Reading from the N-terminus, the 1085-residue chain is DNA mismatch repair protein MutS (1085 aa).

The interval 533–564 (DEDLFGEEEQNAPPVGSSNHAVGTQPSADDEA) is disordered. Over residues 548–559 (GSSNHAVGTQPS) the composition is skewed to polar residues. 812-819 (GPNMSGKS) provides a ligand contact to ATP. The disordered stretch occupies residues 997–1042 (ERRAPRSAPPTVPARGDDRRSAGRASSSGAGAARGEQGRTLPDGQL). Over residues 1019 to 1031 (GRASSSGAGAARG) the composition is skewed to low complexity.

Belongs to the DNA mismatch repair MutS family.

Its function is as follows. This protein is involved in the repair of mismatches in DNA. It is possible that it carries out the mismatch recognition step. This protein has a weak ATPase activity. In Roseiflexus sp. (strain RS-1), this protein is DNA mismatch repair protein MutS.